A 245-amino-acid polypeptide reads, in one-letter code: Suppressor of aph-1 (245 aa).

Positions 12 to 60 constitute a GYF domain; sequence DTKWHYLGPDSEKYGPYMSKDMLFWLQAGYFNDGLQLKTENEPNYHTLG. The disordered stretch occupies residues 126-166; the sequence is NQNGPPMGAQMHSQPPSEPIDAGSLSHTPDSENETRLNEQT.

Its function is as follows. Involved in negative regulation of early and late embryonic Notch signaling. The chain is Suppressor of aph-1 from Caenorhabditis elegans.